The sequence spans 96 residues: Large ribosomal subunit protein uL23 (96 aa).

The protein belongs to the universal ribosomal protein uL23 family. Part of the 50S ribosomal subunit. Contacts protein L29, and trigger factor when it is bound to the ribosome.

Its function is as follows. One of the early assembly proteins it binds 23S rRNA. One of the proteins that surrounds the polypeptide exit tunnel on the outside of the ribosome. Forms the main docking site for trigger factor binding to the ribosome. The protein is Large ribosomal subunit protein uL23 of Thermus thermophilus (strain ATCC BAA-163 / DSM 7039 / HB27).